The primary structure comprises 103 residues: Large ribosomal subunit protein bL21 (103 aa).

It belongs to the bacterial ribosomal protein bL21 family. As to quaternary structure, part of the 50S ribosomal subunit. Contacts protein L20.

This protein binds to 23S rRNA in the presence of protein L20. The polypeptide is Large ribosomal subunit protein bL21 (Haemophilus influenzae (strain 86-028NP)).